The following is a 250-amino-acid chain: 2,3-bisphosphoglycerate-dependent phosphoglycerate mutase (250 aa).

Residues 10 to 17, 23 to 24, R62, 89 to 92, K100, 116 to 117, and 185 to 186 contribute to the substrate site; these read RHGESQWN, TG, ERHY, RR, and GN. H11 functions as the Tele-phosphohistidine intermediate in the catalytic mechanism. E89 acts as the Proton donor/acceptor in catalysis.

This sequence belongs to the phosphoglycerate mutase family. BPG-dependent PGAM subfamily. Homodimer.

It carries out the reaction (2R)-2-phosphoglycerate = (2R)-3-phosphoglycerate. It participates in carbohydrate degradation; glycolysis; pyruvate from D-glyceraldehyde 3-phosphate: step 3/5. In terms of biological role, catalyzes the interconversion of 2-phosphoglycerate and 3-phosphoglycerate. The sequence is that of 2,3-bisphosphoglycerate-dependent phosphoglycerate mutase from Yersinia pseudotuberculosis serotype IB (strain PB1/+).